Reading from the N-terminus, the 605-residue chain is MASLPARRIRNFSIIAHIDHGKSTLADTLLMRTKTVKERDMVKQVLDSMDLERERGITIKLNSARMDYVASDGELYVLNLIDTPGHVDFSYEVSRSLAACEGALLVVDSSQGVEAQTVANVYLALENDLEIFTVLNKIDLAGSEPDRVKQEIEDVLGLDASDAILASAKANIGMDDILERIVQVVPPPRDTANEPLRALIFDSYFDPYRGVVAVFRVMDGTMKTGDAMKMMATGATFAADEIGIMRPDKVPVKELGPGEVGYIIGGIKSVADARVGDTITLSKNPAAEALPGYSKSVPMVFAGIFPTDTDRYDDLRESLQRLQINDCSLSFEPEQNSAMGTGFRCGFLGLLHMEIIQERLEREYDLDLITTAPSVVYNVYRTDGTMDSISNPADLCPPELRERIEEPYCRLDMIAPSDYVGTLMELASQRRGEFIDMTYLSETRTSIKYDIPLAEVVTNYFDDMKSRSRGYASMEYAITGYRQSDLVRLDVLINQEPADPLAVITHRDRAYSIGRQLVDKLKELIPRQMFRIPIQAAIGNKVIAATSISAMRKDVTAKCYGGDISRKKKLLKKQAAGKKRMKQFGKVEVPQDAFLAVLSVDGAAD.

The 183-residue stretch at 7–189 (RRIRNFSIIA…RIVQVVPPPR (183 aa)) folds into the tr-type G domain. GTP is bound by residues 16–23 (AHIDHGKS), 82–86 (DTPGH), and 136–139 (NKID).

The protein belongs to the TRAFAC class translation factor GTPase superfamily. Classic translation factor GTPase family. LepA subfamily.

It localises to the plastid. The protein localises to the chloroplast. The enzyme catalyses GTP + H2O = GDP + phosphate + H(+). In terms of biological role, promotes chloroplast protein synthesis. May act as a fidelity factor of the translation reaction, by catalyzing a one-codon backward translocation of tRNAs on improperly translocated ribosomes. This is Translation factor GUF1 homolog, chloroplastic from Ostreococcus lucimarinus (strain CCE9901).